Reading from the N-terminus, the 32-residue chain is Alpha-conotoxin RgIA (32 aa).

The propeptide occupies 1–19 (SNKRKNAAMLDMIAQHAIR). Cystine bridges form between Cys21–Cys27 and Cys22–Cys31.

This sequence belongs to the conotoxin A superfamily. The disulfide bond CysI-CysIII is important for alpha-9-alpha-10 subtype inhibition, whereas the bond CysII-CysIV contributes to GABA(B) modulation. As to expression, expressed by the venom duct.

It localises to the secreted. This toxin target two types of receptors, the nicotinic acetylcholine receptor (nAChR) and the G-protein-coupled receptor GABA(B). It specifically inhibits the alpha-9-alpha-10/CHRNA9-CHRNA10 nAChR, with preference for rat receptors. It interacts with the alpha-10(+)/alpha-9(-)interface of the receptor. It shows a two order of magnitude species difference potency for the rat versus human alpha-9-alpha-10 nAChR, due to the Thr-86 located in the alpha-9 nAChR subunit. This toxin also shows inhibition of high voltage-activated (HVA) calcium channels (Cav2.2) by acting on GABA(B) receptors (GABBR1 and GABBR2). In vivo, this toxin produces an acute antinociceptive effect in peripheral nerve-injured rats, which may be related to the inhibition of immune cell buildup at the site of nerve injury. In addition, when intramuscularly injected into rats following chronic constriction injury of the sciatic nerve, this toxin protects peripheral nervous tissues as well as prevents central maladaptive plasticity by inhibiting glial cell activation. This Conus regius (Crown cone) protein is Alpha-conotoxin RgIA.